The chain runs to 274 residues: 2,3,4,5-tetrahydropyridine-2,6-dicarboxylate N-succinyltransferase (274 aa).

The protein belongs to the transferase hexapeptide repeat family.

Its subcellular location is the cytoplasm. The catalysed reaction is (S)-2,3,4,5-tetrahydrodipicolinate + succinyl-CoA + H2O = (S)-2-succinylamino-6-oxoheptanedioate + CoA. The protein operates within amino-acid biosynthesis; L-lysine biosynthesis via DAP pathway; LL-2,6-diaminopimelate from (S)-tetrahydrodipicolinate (succinylase route): step 1/3. This is 2,3,4,5-tetrahydropyridine-2,6-dicarboxylate N-succinyltransferase from Leptothrix cholodnii (strain ATCC 51168 / LMG 8142 / SP-6) (Leptothrix discophora (strain SP-6)).